The sequence spans 726 residues: Probable cyclic nucleotide-gated ion channel 14 (726 aa).

Topologically, residues 1–86 (MEFKRDNTVR…GDAVLQWNRV (86 aa)) are cytoplasmic. Residues 87–107 (FLFWCLVALYVDPLFFFLSSV) form a helical membrane-spanning segment. The Extracellular segment spans residues 108 to 122 (KRIGRSSCMTTDLKL). Residues 123–143 (GIVITFFRTLADLFYVLHIVI) form a helical membrane-spanning segment. Topologically, residues 144-177 (KFRTAYVSRTSRVFGRGELVKDPKLIARRYLRSD) are cytoplasmic. A helical membrane pass occupies residues 178 to 198 (FIVDLIACLPLPQIVSWFILP). The Extracellular portion of the chain corresponds to 199 to 211 (SIRSSHSDHTTNA). The helical transmembrane segment at 212-232 (LVLIVLVQYIPRLYLIFPLSA) threads the bilayer. At 233–252 (EIIKATGVVTTTAWAGAAYN) the chain is on the cytoplasmic side. The chain crosses the membrane as a helical span at residues 253–273 (LLQYMLASHILGSAWYLLSIE). Residues 274 to 377 (RQATCWKAEC…LSTSTSVLET (104 aa)) are Extracellular-facing. Residues 378–398 (MFAILVAIFGLVLFALLIGNM) form a helical membrane-spanning segment. At 399 to 726 (QTYLQSITVR…PDEPDFSVDD (328 aa)) the chain is on the cytoplasmic side. A nucleoside 3',5'-cyclic phosphate-binding positions include 481–605 (LFAQ…SKKL) and glutamate 552. The calmodulin-binding stretch occupies residues 597 to 612 (FRRLHSKKLQHTFRYY). An IQ domain is found at 617 to 646 (RTWAACFVQVAWRRYKRKKLAKSLSLAESF). The segment at 707-726 (KDVEIPMLPKPDEPDFSVDD) is disordered.

It belongs to the cyclic nucleotide-gated cation channel (TC 1.A.1.5) family. Homotetramer or heterotetramer.

The protein resides in the cell membrane. Functionally, probable cyclic nucleotide-gated ion channel. The protein is Probable cyclic nucleotide-gated ion channel 14 (CNGC14) of Arabidopsis thaliana (Mouse-ear cress).